The following is a 279-amino-acid chain: Serine protease 29 (279 aa).

An N-terminal signal peptide occupies residues 1–17; that stretch reads MLIQLCLTLFFLGCSIA. Residues 31 to 276 enclose the Peptidase S1 domain; sequence IVGGHSAPQG…FLPWITQQMQ (246 aa). Cys62 and Cys78 form a disulfide bridge. Residues His77 and Asp124 each act as charge relay system in the active site. 3 disulfides stabilise this stretch: Cys158–Cys234, Cys191–Cys215, and Cys224–Cys252. Residue Asn197 is glycosylated (N-linked (GlcNAc...) asparagine). The Charge relay system role is filled by Ser228. Asn235 carries N-linked (GlcNAc...) asparagine glycosylation.

The protein belongs to the peptidase S1 family. Homooligomer, heterodimer and heterotetramer. Able to form homo- and hetero- tetrameric structures. Heterotetramer is far more stable than the homotetramer. As to expression, expressed in embryos and placenta. Found in uterus especially in glandular epithelium during zona lysis and implantation.

The protein localises to the secreted. Involved in embryo hatching and implantation. The polypeptide is Serine protease 29 (Prss29) (Mus musculus (Mouse)).